The chain runs to 212 residues: Uridine kinase (212 aa).

13–20 (GASASGKS) contributes to the ATP binding site.

The protein belongs to the uridine kinase family.

The protein resides in the cytoplasm. The catalysed reaction is uridine + ATP = UMP + ADP + H(+). It carries out the reaction cytidine + ATP = CMP + ADP + H(+). It functions in the pathway pyrimidine metabolism; CTP biosynthesis via salvage pathway; CTP from cytidine: step 1/3. It participates in pyrimidine metabolism; UMP biosynthesis via salvage pathway; UMP from uridine: step 1/1. This Psychromonas ingrahamii (strain DSM 17664 / CCUG 51855 / 37) protein is Uridine kinase.